A 94-amino-acid chain; its full sequence is FXYD domain-containing ion transport regulator 6 (94 aa).

The N-terminal stretch at 1-17 (METVLILCSLLAPVVLA) is a signal peptide. The Extracellular portion of the chain corresponds to 18–34 (SAAEKEKEKDPFYYDYQ). A helical transmembrane segment spans residues 35-57 (TLRIGGLVFAVVLFSVGILLILS). Residues 58–94 (RRCKCSFNQKPRAPGDEEAQVENLITTNAAEPQKAEN) lie on the Cytoplasmic side of the membrane.

Belongs to the FXYD family. Regulatory subunit of the sodium/potassium-transporting ATPase which is composed of a catalytic alpha subunit, a non-catalytic beta subunit and an additional regulatory subunit. The regulatory subunit, a member of the FXYD protein family, modulates the enzymatic activity in a tissue- and isoform-specific way by changing affinities of the Na+/K+-ATPase toward Na(+), K(+) or ATP. As to expression, expressed in the neuronal fibers of the medial part of lateral habenula nucleus, thalamus, hypothalamus, stria terminalis, zona incerta, amygdaloid body and cingulum, olfactory bulb, hippocampus, cerebral cortex and cerebellum. In the cerebellum there is a predominant expression pattern in the granule layer of lobules VI-IX of the posterior lobe. Detected in inner ear.

It localises to the cell membrane. Associates with and regulates the activity of the sodium/potassium-transporting ATPase (NKA) which catalyzes the hydrolysis of ATP coupled with the exchange of Na(+) and K(+) ions across the plasma membrane. Decreases the apparent affinity of the transporter for Na(+). In addition to modulating NKA kinetics, may also function as a regulator of NKA localization to the plasma membrane. In Rattus norvegicus (Rat), this protein is FXYD domain-containing ion transport regulator 6 (Fxyd6).